Here is a 477-residue protein sequence, read N- to C-terminus: V-type proton ATPase subunit B (477 aa).

Arg-365 provides a ligand contact to ATP.

It belongs to the ATPase alpha/beta chains family. V-ATPase is a heteromultimeric enzyme composed of a peripheral catalytic V1 complex (components A to H) attached to an integral membrane V0 proton pore complex (components: a, c, c', c'', d, e, f and VOA1).

The protein localises to the vacuole membrane. Functionally, non-catalytic subunit of the V1 complex of vacuolar(H+)-ATPase (V-ATPase), a multisubunit enzyme composed of a peripheral complex (V1) that hydrolyzes ATP and a membrane integral complex (V0) that translocates protons. V-ATPase is responsible for acidifying and maintaining the pH of intracellular compartments. The polypeptide is V-type proton ATPase subunit B (Encephalitozoon cuniculi (strain GB-M1) (Microsporidian parasite)).